The chain runs to 188 residues: Putative manganese efflux pump MntP (188 aa).

6 helical membrane-spanning segments follow: residues 3-23, 35-55, 63-83, 104-126, 140-160, and 167-187; these read LYALLLVALGMSMDAFAVALA, IAATALVFGTVEAFMPLAGWV, FISEWDHWVAFVLLGGLGLKM, WMTVLTAFGTSIDSMIVGVGLAF, MAATVMVTIGLTAGKAFGVLF, and AGGLVLIAIGTWTLLSHLGLI.

It belongs to the MntP (TC 9.B.29) family.

The protein resides in the cell inner membrane. In terms of biological role, probably functions as a manganese efflux pump. The sequence is that of Putative manganese efflux pump MntP from Neisseria gonorrhoeae (strain ATCC 700825 / FA 1090).